The primary structure comprises 118 residues: MNPLNLSTFIVFTLFAASATTALTCFQCTTSEGSDYCVSSFPKPSQCLPLMNYCTKIITTSNGAISVLRSCNVVSLDNTCMETGTGKICSFSCDTDACNAGSQFHCNRFQLPFLLTLF.

The N-terminal stretch at 1–22 (MNPLNLSTFIVFTLFAASATTA) is a signal peptide.

Belongs to the scoloptoxin-05 family. In terms of processing, contains 5 disulfide bonds. Expressed by the venom gland.

The protein resides in the secreted. The chain is U-scoloptoxin(05)-Cw1a from Cormocephalus westwoodi (Westwood's green centipede).